We begin with the raw amino-acid sequence, 204 residues long: Urease accessory protein UreG 1 (204 aa).

14–21 contributes to the GTP binding site; sequence GPVGSGKT.

This sequence belongs to the SIMIBI class G3E GTPase family. UreG subfamily. Homodimer. UreD, UreF and UreG form a complex that acts as a GTP-hydrolysis-dependent molecular chaperone, activating the urease apoprotein by helping to assemble the nickel containing metallocenter of UreC. The UreE protein probably delivers the nickel.

It is found in the cytoplasm. Functionally, facilitates the functional incorporation of the urease nickel metallocenter. This process requires GTP hydrolysis, probably effectuated by UreG. The polypeptide is Urease accessory protein UreG 1 (Methylorubrum extorquens (strain PA1) (Methylobacterium extorquens)).